Reading from the N-terminus, the 287-residue chain is Energy-coupling factor transporter ATP-binding protein EcfA1 (287 aa).

In terms of domain architecture, ABC transporter spans 6–248; it reads IVAEGVSYAY…ADRIRALRLD (243 aa). 47–54 serves as a coordination point for ATP; that stretch reads GMNGSGKS.

Belongs to the ABC transporter superfamily. Energy-coupling factor EcfA family. Forms a stable energy-coupling factor (ECF) transporter complex composed of 2 membrane-embedded substrate-binding proteins (S component), 2 ATP-binding proteins (A component) and 2 transmembrane proteins (T component).

The protein resides in the cell membrane. In terms of biological role, ATP-binding (A) component of a common energy-coupling factor (ECF) ABC-transporter complex. Unlike classic ABC transporters this ECF transporter provides the energy necessary to transport a number of different substrates. The protein is Energy-coupling factor transporter ATP-binding protein EcfA1 of Symbiobacterium thermophilum (strain DSM 24528 / JCM 14929 / IAM 14863 / T).